Reading from the N-terminus, the 600-residue chain is Methionine--tRNA ligase (600 aa).

The short motif at 11–21 (PYANGPRHIGH) is the 'HIGH' region element. Zn(2+) contacts are provided by C143, C146, C156, and C159. A 'KMSKS' region motif is present at residues 350–354 (QFSSS). Position 353 (S353) interacts with ATP.

Belongs to the class-I aminoacyl-tRNA synthetase family. MetG type 1 subfamily. As to quaternary structure, monomer. The cofactor is Zn(2+).

Its subcellular location is the cytoplasm. It catalyses the reaction tRNA(Met) + L-methionine + ATP = L-methionyl-tRNA(Met) + AMP + diphosphate. Functionally, is required not only for elongation of protein synthesis but also for the initiation of all mRNA translation through initiator tRNA(fMet) aminoacylation. The polypeptide is Methionine--tRNA ligase (Kineococcus radiotolerans (strain ATCC BAA-149 / DSM 14245 / SRS30216)).